We begin with the raw amino-acid sequence, 166 residues long: Small ribosomal subunit protein uS5 (166 aa).

One can recognise an S5 DRBM domain in the interval 11–74 (LIEKLVSVKR…ENAKKNMVSV (64 aa)).

This sequence belongs to the universal ribosomal protein uS5 family. As to quaternary structure, part of the 30S ribosomal subunit. Contacts proteins S4 and S8.

In terms of biological role, with S4 and S12 plays an important role in translational accuracy. Located at the back of the 30S subunit body where it stabilizes the conformation of the head with respect to the body. This is Small ribosomal subunit protein uS5 from Francisella tularensis subsp. holarctica (strain LVS).